The primary structure comprises 169 residues: Disulfide bond formation protein B 1 (169 aa).

Over 1-14 (MSDNTLYLRREKRF) the chain is Cytoplasmic. Residues 15–31 (LVLLGIICLALIGGALY) form a helical membrane-spanning segment. Residues 32 to 49 (MQVVLDEAPCPLCILQRY) lie on the Periplasmic side of the membrane. A disulfide bridge connects residues C41 and C44. Residues 50–65 (ALLFIAIFAFIGAAMP) form a helical membrane-spanning segment. Over 66–72 (GRRSVTA) the chain is Cytoplasmic. A helical transmembrane segment spans residues 73 to 89 (FETLVTLSALGGIAAAG). Topologically, residues 90–144 (RHVWILAHPSDSCGIDVLQPIVDGLPLATLFPTGFQVSGFCTTPYPPVLGLSLAQ) are periplasmic. Cysteines 102 and 130 form a disulfide. A helical membrane pass occupies residues 145–163 (WALTAFVLTAVLVPACIIR). The Cytoplasmic portion of the chain corresponds to 164-169 (NRRKPY).

Belongs to the DsbB family.

It localises to the cell inner membrane. In terms of biological role, required for disulfide bond formation in some periplasmic proteins. Acts by oxidizing the DsbA protein. The protein is Disulfide bond formation protein B 1 of Pseudomonas syringae pv. syringae (strain B728a).